The following is a 366-amino-acid chain: Inositol 2-dehydrogenase (366 aa).

Belongs to the Gfo/Idh/MocA family. In terms of assembly, homotetramer.

It catalyses the reaction myo-inositol + NAD(+) = scyllo-inosose + NADH + H(+). Functionally, involved in the oxidation of myo-inositol (MI) to 2-keto-myo-inositol (2KMI or 2-inosose). This is Inositol 2-dehydrogenase from Rhodococcus jostii (strain RHA1).